The primary structure comprises 36 residues: Photosystem I reaction center subunit VIII (36 aa).

Residues 7-29 traverse the membrane as a helical segment; the sequence is PSILVPLVGLVFPAITLASLFIY.

This sequence belongs to the PsaI family.

The protein localises to the plastid. Its subcellular location is the chloroplast thylakoid membrane. In terms of biological role, may help in the organization of the PsaL subunit. The sequence is that of Photosystem I reaction center subunit VIII from Anthoceros angustus (Hornwort).